The following is a 201-amino-acid chain: Recombination protein RecR (201 aa).

Residues 60-75 (CSCCGNVDTSDPCTIC) form a C4-type zinc finger. Positions 83–178 (ATLIVVEDVS…RVTRLAHGVP (96 aa)) constitute a Toprim domain.

This sequence belongs to the RecR family.

Its function is as follows. May play a role in DNA repair. It seems to be involved in an RecBC-independent recombinational process of DNA repair. It may act with RecF and RecO. In Brucella ovis (strain ATCC 25840 / 63/290 / NCTC 10512), this protein is Recombination protein RecR.